The following is a 623-amino-acid chain: UvrABC system protein C (623 aa).

One can recognise a GIY-YIG domain in the interval 13 to 92 (DKPGVYIMKN…IKKYKPRYNI (80 aa)). In terms of domain architecture, UVR spans 204–239 (NDIIRELKEEMEKASMNLDFEKAADLRDKMLAAQKV).

This sequence belongs to the UvrC family. Interacts with UvrB in an incision complex.

It is found in the cytoplasm. The UvrABC repair system catalyzes the recognition and processing of DNA lesions. UvrC both incises the 5' and 3' sides of the lesion. The N-terminal half is responsible for the 3' incision and the C-terminal half is responsible for the 5' incision. The protein is UvrABC system protein C of Clostridium acetobutylicum (strain ATCC 824 / DSM 792 / JCM 1419 / IAM 19013 / LMG 5710 / NBRC 13948 / NRRL B-527 / VKM B-1787 / 2291 / W).